The chain runs to 341 residues: Methionine import ATP-binding protein MetN 2 (341 aa).

The 240-residue stretch at 2 to 241 (IKLNQIVKRY…PQHEVTKRFV (240 aa)) folds into the ABC transporter domain. 38 to 45 (GFSGAGKS) lines the ATP pocket.

It belongs to the ABC transporter superfamily. Methionine importer (TC 3.A.1.24) family. The complex is composed of two ATP-binding proteins (MetN), two transmembrane proteins (MetI) and a solute-binding protein (MetQ).

The protein localises to the cell membrane. The catalysed reaction is L-methionine(out) + ATP + H2O = L-methionine(in) + ADP + phosphate + H(+). The enzyme catalyses D-methionine(out) + ATP + H2O = D-methionine(in) + ADP + phosphate + H(+). In terms of biological role, part of the ABC transporter complex MetNIQ involved in methionine import. Responsible for energy coupling to the transport system. The chain is Methionine import ATP-binding protein MetN 2 from Staphylococcus epidermidis (strain ATCC 35984 / DSM 28319 / BCRC 17069 / CCUG 31568 / BM 3577 / RP62A).